A 298-amino-acid polypeptide reads, in one-letter code: Elongation factor Ts (298 aa).

The interval 80–83 is involved in Mg(2+) ion dislocation from EF-Tu; that stretch reads TDFV.

It belongs to the EF-Ts family.

Its subcellular location is the cytoplasm. Its function is as follows. Associates with the EF-Tu.GDP complex and induces the exchange of GDP to GTP. It remains bound to the aminoacyl-tRNA.EF-Tu.GTP complex up to the GTP hydrolysis stage on the ribosome. The polypeptide is Elongation factor Ts (Paracidovorax citrulli (strain AAC00-1) (Acidovorax citrulli)).